The following is a 598-amino-acid chain: Beta-hexosaminidase A (598 aa).

The N-terminal stretch at 1-11 is a signal peptide; that stretch reads MSFITSAHATA. Residue Asp305 is part of the active site.

This sequence belongs to the glycosyl hydrolase 3 family.

The enzyme catalyses Hydrolysis of terminal non-reducing N-acetyl-D-hexosamine residues in N-acetyl-beta-D-hexosaminides.. Functionally, most active towards p-nitrophenyl-N-acetyl-beta-D-glucosaminide(PNP-beta-GlcNAc) and diacetylchitobiose. This chain is Beta-hexosaminidase A (cht60), found in Pseudoalteromonas piscicida.